A 1048-amino-acid polypeptide reads, in one-letter code: uncharacterized protein (1048 aa).

The segment at 601-629 (ENQINEEQQTNVENEQQTEQQFENEDKET) is disordered. Residues 605 to 621 (NEEQQTNVENEQQTEQQ) show a composition bias toward low complexity.

This is an uncharacterized protein from Methanocaldococcus jannaschii (strain ATCC 43067 / DSM 2661 / JAL-1 / JCM 10045 / NBRC 100440) (Methanococcus jannaschii).